Here is a 222-residue protein sequence, read N- to C-terminus: Coiled-coil domain-containing protein 43 (222 aa).

Lys93 is covalently cross-linked (Glycyl lysine isopeptide (Lys-Gly) (interchain with G-Cter in SUMO1)). Residues 119–143 (SEEEKQRKAALLAQYADVTDEEDEA) adopt a coiled-coil conformation. Residues 136–222 (VTDEEDEADK…KRTQKGERKR (87 aa)) form a disordered region. Position 137 is a phosphothreonine (Thr137). A compositionally biased stretch (polar residues) spans 152–168 (STANVSSDRTLFRNTNV). Over residues 172 to 209 (LNARKLERDSLRDESQRKKEQDKLQREKDKLAKQERKE) the composition is skewed to basic and acidic residues. Positions 175-217 (RKLERDSLRDESQRKKEQDKLQREKDKLAKQERKEKEKKRTQK) form a coiled coil. Over residues 210 to 222 (KEKKRTQKGERKR) the composition is skewed to basic residues.

This sequence belongs to the CCDC43 family.

This is Coiled-coil domain-containing protein 43 (Ccdc43) from Mus musculus (Mouse).